Here is a 147-residue protein sequence, read N- to C-terminus: Acireductone dioxygenase (147 aa).

Residues H74, H76, E80, and H119 each coordinate Fe(2+). Ni(2+) is bound by residues H74, H76, E80, and H119.

This sequence belongs to the acireductone dioxygenase (ARD) family. Requires Fe(2+) as cofactor. Ni(2+) is required as a cofactor.

It localises to the cytoplasm. The protein localises to the nucleus. It carries out the reaction 1,2-dihydroxy-5-(methylsulfanyl)pent-1-en-3-one + O2 = 4-methylsulfanyl-2-oxobutanoate + formate + 2 H(+). The catalysed reaction is 1,2-dihydroxy-5-(methylsulfanyl)pent-1-en-3-one + O2 = 3-(methylsulfanyl)propanoate + CO + formate + 2 H(+). The protein operates within amino-acid biosynthesis; L-methionine biosynthesis via salvage pathway; L-methionine from S-methyl-5-thio-alpha-D-ribose 1-phosphate: step 5/6. In terms of biological role, catalyzes 2 different reactions between oxygen and the acireductone 1,2-dihydroxy-3-keto-5-methylthiopentene (DHK-MTPene) depending upon the metal bound in the active site. Fe-containing acireductone dioxygenase (Fe-ARD) produces formate and 2-keto-4-methylthiobutyrate (KMTB), the alpha-ketoacid precursor of methionine in the methionine recycle pathway. Ni-containing acireductone dioxygenase (Ni-ARD) produces methylthiopropionate, carbon monoxide and formate, and does not lie on the methionine recycle pathway. The sequence is that of Acireductone dioxygenase (adi1) from Dictyostelium discoideum (Social amoeba).